The following is a 277-amino-acid chain: Indole-3-glycerol phosphate synthase (277 aa).

This sequence belongs to the TrpC family.

It carries out the reaction 1-(2-carboxyphenylamino)-1-deoxy-D-ribulose 5-phosphate + H(+) = (1S,2R)-1-C-(indol-3-yl)glycerol 3-phosphate + CO2 + H2O. Its pathway is amino-acid biosynthesis; L-tryptophan biosynthesis; L-tryptophan from chorismate: step 4/5. In Pseudomonas putida (strain W619), this protein is Indole-3-glycerol phosphate synthase.